Consider the following 335-residue polypeptide: Mycobacterial beta-ketoacyl-[acyl-carrier-protein] synthase III (335 aa).

Catalysis depends on residues cysteine 122 and histidine 258. The ACP-binding stretch occupies residues 259–263 (QANSR). Asparagine 289 is an active-site residue.

This sequence belongs to the thiolase-like superfamily. FabH family. Homodimer.

It localises to the cytoplasm. It carries out the reaction malonyl-[ACP] + dodecanoyl-CoA + H(+) = 3-oxotetradecanoyl-[ACP] + CO2 + CoA. It participates in lipid metabolism; fatty acid biosynthesis. It functions in the pathway lipid metabolism; mycolic acid biosynthesis. In terms of biological role, catalyzes the condensation reaction of fatty acid synthesis by the addition to an acyl acceptor of two carbons from malonyl-ACP. Catalyzes the first condensation reaction which initiates fatty acid synthesis and may therefore play a role in governing the total rate of fatty acid production. Possesses both acetoacetyl-ACP synthase and acetyl transacylase activities. Its substrate specificity determines the biosynthesis of branched-chain and/or straight-chain of fatty acids. This chain is Mycobacterial beta-ketoacyl-[acyl-carrier-protein] synthase III, found in Mycobacterium avium (strain 104).